The sequence spans 502 residues: Lysine--tRNA ligase (502 aa).

2 residues coordinate Mg(2+): E411 and E418.

The protein belongs to the class-II aminoacyl-tRNA synthetase family. In terms of assembly, homodimer. It depends on Mg(2+) as a cofactor.

Its subcellular location is the cytoplasm. The catalysed reaction is tRNA(Lys) + L-lysine + ATP = L-lysyl-tRNA(Lys) + AMP + diphosphate. In Clostridium tetani (strain Massachusetts / E88), this protein is Lysine--tRNA ligase.